The primary structure comprises 190 residues: Endoribonuclease YbeY (190 aa).

The interval 1-20 is disordered; sequence MDVENDRPPRRGAAGERNSG. Zn(2+)-binding residues include His147, His151, and His157.

Belongs to the endoribonuclease YbeY family. The cofactor is Zn(2+).

It is found in the cytoplasm. In terms of biological role, single strand-specific metallo-endoribonuclease involved in late-stage 70S ribosome quality control and in maturation of the 3' terminus of the 16S rRNA. The sequence is that of Endoribonuclease YbeY from Nitrobacter hamburgensis (strain DSM 10229 / NCIMB 13809 / X14).